We begin with the raw amino-acid sequence, 75 residues long: Vacuolar ATPase assembly integral membrane protein VMA21 (75 aa).

At 1–8 the chain is on the cytoplasmic side; sequence MPVDVAPG. The helical transmembrane segment at 9 to 29 threads the bilayer; it reads VIKKLMFFTAAMVICPLLTFF. The Lumenal portion of the chain corresponds to 30-41; that stretch reads SIKQFTTNTIVS. The chain crosses the membrane as a helical span at residues 42-62; sequence GGLAALAANLVLIGYIVVAFM. The Cytoplasmic segment spans residues 63 to 75; that stretch reads EDTTDVKAESKKD.

The protein belongs to the VMA21 family.

Its subcellular location is the endoplasmic reticulum membrane. The protein localises to the endoplasmic reticulum-Golgi intermediate compartment membrane. It localises to the cytoplasmic vesicle. It is found in the COPII-coated vesicle membrane. Its function is as follows. Required for the assembly of the V0 complex of the vacuolar ATPase (V-ATPase) in the endoplasmic reticulum. The sequence is that of Vacuolar ATPase assembly integral membrane protein VMA21 from Vanderwaltozyma polyspora (strain ATCC 22028 / DSM 70294 / BCRC 21397 / CBS 2163 / NBRC 10782 / NRRL Y-8283 / UCD 57-17) (Kluyveromyces polysporus).